The following is a 329-amino-acid chain: Acetyl-coenzyme A carboxylase carboxyl transferase subunit alpha (329 aa).

The region spanning 40–294 (QLETLAARRR…REAIERHLDE (255 aa)) is the CoA carboxyltransferase C-terminal domain.

It belongs to the AccA family. In terms of assembly, acetyl-CoA carboxylase is a heterohexamer composed of biotin carboxyl carrier protein (AccB), biotin carboxylase (AccC) and two subunits each of ACCase subunit alpha (AccA) and ACCase subunit beta (AccD).

The protein resides in the cytoplasm. The catalysed reaction is N(6)-carboxybiotinyl-L-lysyl-[protein] + acetyl-CoA = N(6)-biotinyl-L-lysyl-[protein] + malonyl-CoA. It functions in the pathway lipid metabolism; malonyl-CoA biosynthesis; malonyl-CoA from acetyl-CoA: step 1/1. Functionally, component of the acetyl coenzyme A carboxylase (ACC) complex. First, biotin carboxylase catalyzes the carboxylation of biotin on its carrier protein (BCCP) and then the CO(2) group is transferred by the carboxyltransferase to acetyl-CoA to form malonyl-CoA. This chain is Acetyl-coenzyme A carboxylase carboxyl transferase subunit alpha, found in Prochlorococcus marinus (strain MIT 9313).